Here is a 393-residue protein sequence, read N- to C-terminus: Lipid-A-disaccharide synthase (393 aa).

This sequence belongs to the LpxB family.

The catalysed reaction is a lipid X + a UDP-2-N,3-O-bis[(3R)-3-hydroxyacyl]-alpha-D-glucosamine = a lipid A disaccharide + UDP + H(+). The protein operates within bacterial outer membrane biogenesis; LPS lipid A biosynthesis. In terms of biological role, condensation of UDP-2,3-diacylglucosamine and 2,3-diacylglucosamine-1-phosphate to form lipid A disaccharide, a precursor of lipid A, a phosphorylated glycolipid that anchors the lipopolysaccharide to the outer membrane of the cell. The chain is Lipid-A-disaccharide synthase from Colwellia psychrerythraea (strain 34H / ATCC BAA-681) (Vibrio psychroerythus).